The primary structure comprises 141 residues: Hemoglobin subunit alpha (141 aa).

One can recognise a Globin domain in the interval 1 to 141 (VLSPADKTNV…VSTVLTSKYR (141 aa)). Serine 3 carries the phosphoserine modification. Lysine 7 is subject to N6-succinyllysine. Phosphothreonine is present on threonine 8. The residue at position 11 (lysine 11) is an N6-succinyllysine. An N6-acetyllysine; alternate modification is found at lysine 16. Lysine 16 bears the N6-succinyllysine; alternate mark. Tyrosine 24 is subject to Phosphotyrosine. Lysine 40 carries the N6-succinyllysine modification. Position 49 is a phosphoserine (serine 49). Histidine 58 lines the O2 pocket. Residue histidine 87 coordinates heme b. Serine 102 carries the post-translational modification Phosphoserine. Threonine 108 is modified (phosphothreonine). At serine 124 the chain carries Phosphoserine. Phosphothreonine is present on residues threonine 134 and threonine 137. The residue at position 138 (serine 138) is a Phosphoserine.

Belongs to the globin family. In terms of assembly, heterotetramer of two alpha chains and two beta chains. In terms of tissue distribution, red blood cells.

In terms of biological role, involved in oxygen transport from the lung to the various peripheral tissues. Its function is as follows. Hemopressin acts as an antagonist peptide of the cannabinoid receptor CNR1. Hemopressin-binding efficiently blocks cannabinoid receptor CNR1 and subsequent signaling. The chain is Hemoglobin subunit alpha (HBA) from Phoca vitulina (Harbor seal).